We begin with the raw amino-acid sequence, 134 residues long: Protein OPG030 (134 aa).

Residues 88–133 form the BACK domain; sequence YKENGLRNSFLRQYINNNIEEIRNTDQFLKFDVDSVCDILNNDETI.

This sequence belongs to the orthopoxvirus OPG030 family.

The sequence is that of Protein OPG030 (OPG30) from Variola virus (isolate Human/India/Ind3/1967) (VARV).